Reading from the N-terminus, the 525-residue chain is Neutrophil cytosol factor 2 (525 aa).

TPR repeat units lie at residues 37–70 (SRICFNIGCVNTILENLQAAEQAFTKSINRDKHS), 71–104 (AVAYFQRGMLYYRMEKYDLAIKDLKEALTQLRGN), and 121–154 (CEVLYNIALMHAKKEEWKKAEEQLALATNMKSEP). Thr233 bears the Phosphothreonine mark. The SH3 1 domain occupies 240-299 (LEGEAHRVLFGFVPETPEELQVMPGNIVFVLKKGSDNWATVMFNGQKGLVPCNYLEPVEL). Residues 304–343 (QSQPQEDTSPESDIPPPPNSSPPGRLQLSPGHKQKEPKEL) are disordered. 2 positions are modified to phosphoserine: Ser324 and Ser398. The PB1 domain occupies 350 to 428 (PYMLKVHYKY…YCLTLWCEHT (79 aa)). The interval 437–457 (EPIQRENSDASKQTTEPQPKE) is disordered. Residues 456-515 (KEGTQVVAIFSYEAAQPEDLEFVEGDVILVLSHVNEEWLEGECKGKVGIFPKAFVEGCAA) form the SH3 2 domain.

It belongs to the NCF2/NOXA1 family. As to quaternary structure, component of the phagocyte NADPH oxidase complex composed of an obligatory core heterodimer formed by the membrane proteins CYBA and CYBB and the cytosolic regulatory subunits NCF1/p47-phox, NCF2/p67-phox, NCF4/p40-phox and the small GTPase RAC1 or RAC2. Part of a cytosolic complex composed at least by NCF1, NCF2 and NCF4. Interacts with NCF4. Interacts (via the C-terminal SH3 domain) with NCF1 (via C-terminus). Interacts with SYTL1 and RAC1. May interact with NOXO1. Interacts with S100A8 and calprotectin (S100A8/9). Interacts with GBP7 (via GB1/RHD3-type G domain). Interacts with CYBB; the interaction is enhanced in the presence of GBP7.

The protein localises to the cytoplasm. NCF2, NCF1, and a membrane bound cytochrome b558 are required for activation of the latent NADPH oxidase (necessary for superoxide production). Its function is as follows. Subunit of the phagocyte NADPH oxidase complex that mediates the transfer of electrons from cytosolic NADPH to O2 to produce the superoxide anion (O2(-)). In the activated complex, electrons are first transferred from NADPH to flavin adenine dinucleotide (FAD) and subsequently transferred via two heme molecules to molecular oxygen, producing superoxide through an outer-sphere reaction. Activation of the NADPH oxidase complex is initiated by the assembly of cytosolic subunits of the NADPH oxidase complex with the core NADPH oxidase complex to form a complex at the plasma membrane or phagosomal membrane. This activation process is initiated by phosphorylation dependent binding of the cytosolic NCF1/p47-phox subunit to the C-terminus of CYBA/p22-phox. This Mus musculus (Mouse) protein is Neutrophil cytosol factor 2.